Reading from the N-terminus, the 123-residue chain is Gamma-synuclein (123 aa).

2 repeat units span residues 20-30 (EKTKQGVTEAA) and 31-41 (EKTKEGVMYVG). Positions 20 to 67 (EKTKQGVTEAAEKTKEGVMYVGTKTKGERGTSVTSVAEKTKEQANAVS) are 4 X 11 AA tandem repeats of [EGSA]-K-T-K-[EQ]-[GQ]-V-X(4). A 3; approximate repeat occupies 42-56 (TKTKGERGTSVTSVA). Repeat 4 spans residues 57 to 67 (EKTKEQANAVS). A phosphoserine mark is found at serine 67 and serine 72. Residues 93-123 (GVVRKEDLEPPAQDQEAKEQEEGEEAKSGGD) form a disordered region. A compositionally biased stretch (basic and acidic residues) spans 107–123 (QEAKEQEEGEEAKSGGD). Serine 120 is subject to Phosphoserine; by BARK1, CaMK2 and CK2.

The protein belongs to the synuclein family. In terms of assembly, may be a centrosome-associated protein. Interacts with MYOC; affects its secretion and its aggregation. Post-translationally, phosphorylated. Phosphorylation by GRK5 appears to occur on residues distinct from the residue phosphorylated by other kinases. Specifically expressed in the peripheral nervous system. High expression in motoneurons of the brainstem. Also found in neurons of many other brain regions including the cerebellar cortex, thalamus, hypothalamus and CA1, CA2, CA3 and CA4 regions of the hippocampus.

It is found in the cytoplasm. The protein localises to the perinuclear region. It localises to the cytoskeleton. Its subcellular location is the microtubule organizing center. The protein resides in the centrosome. It is found in the spindle. Its function is as follows. Plays a role in neurofilament network integrity. May be involved in modulating axonal architecture during development and in the adult. In vitro, increases the susceptibility of neurofilament-H to calcium-dependent proteases. May also function in modulating the keratin network in skin. Activates the MAPK and Elk-1 signal transduction pathway. This is Gamma-synuclein (Sncg) from Rattus norvegicus (Rat).